We begin with the raw amino-acid sequence, 96 residues long: MARNRLTENELNEALTELDGWQKVDGREAIAKSFKFKDFNAAFGFMTRAALHAEKLDHHPEWFNVYNRVDVTLATHSENGITELDIKLARKMNAIA.

This sequence belongs to the pterin-4-alpha-carbinolamine dehydratase family.

The catalysed reaction is (4aS,6R)-4a-hydroxy-L-erythro-5,6,7,8-tetrahydrobiopterin = (6R)-L-erythro-6,7-dihydrobiopterin + H2O. This Brucella anthropi (strain ATCC 49188 / DSM 6882 / CCUG 24695 / JCM 21032 / LMG 3331 / NBRC 15819 / NCTC 12168 / Alc 37) (Ochrobactrum anthropi) protein is Putative pterin-4-alpha-carbinolamine dehydratase.